The chain runs to 114 residues: Probable acid stress chaperone HdeA (114 aa).

The first 26 residues, 1 to 26, serve as a signal peptide directing secretion; the sequence is MIKALFNKNTALAAVTILALSGGAMA. An intrachain disulfide couples cysteine 46 to cysteine 94.

The protein belongs to the HdeA family.

It localises to the periplasm. Required for optimal acid stress protection. Exhibits a chaperone-like activity only at low pH by suppressing non-specifically the aggregation of denaturated periplasmic proteins. This Brucella suis biovar 1 (strain 1330) protein is Probable acid stress chaperone HdeA.